The primary structure comprises 320 residues: Tetraacyldisaccharide 4'-kinase (320 aa).

Position 53–60 (53–60 (SVGGNGKT)) interacts with ATP.

Belongs to the LpxK family.

It catalyses the reaction a lipid A disaccharide + ATP = a lipid IVA + ADP + H(+). Its pathway is glycolipid biosynthesis; lipid IV(A) biosynthesis; lipid IV(A) from (3R)-3-hydroxytetradecanoyl-[acyl-carrier-protein] and UDP-N-acetyl-alpha-D-glucosamine: step 6/6. Functionally, transfers the gamma-phosphate of ATP to the 4'-position of a tetraacyldisaccharide 1-phosphate intermediate (termed DS-1-P) to form tetraacyldisaccharide 1,4'-bis-phosphate (lipid IVA). In Psychromonas ingrahamii (strain DSM 17664 / CCUG 51855 / 37), this protein is Tetraacyldisaccharide 4'-kinase.